A 474-amino-acid chain; its full sequence is Glycogen synthase (474 aa).

Residue Lys-12 participates in ADP-alpha-D-glucose binding.

This sequence belongs to the glycosyltransferase 1 family. Bacterial/plant glycogen synthase subfamily.

The enzyme catalyses [(1-&gt;4)-alpha-D-glucosyl](n) + ADP-alpha-D-glucose = [(1-&gt;4)-alpha-D-glucosyl](n+1) + ADP + H(+). The protein operates within glycan biosynthesis; glycogen biosynthesis. In terms of biological role, synthesizes alpha-1,4-glucan chains using ADP-glucose. This Xanthomonas axonopodis pv. citri (strain 306) protein is Glycogen synthase.